The sequence spans 540 residues: GMP synthase [glutamine-hydrolyzing] (540 aa).

Residues 26 to 216 (LIIILDFGSQ…VYHICDCEPT (191 aa)) form the Glutamine amidotransferase type-1 domain. Residue C103 is the Nucleophile of the active site. Catalysis depends on residues H190 and E192. One can recognise a GMPS ATP-PPase domain in the interval 217–415 (WTTAAFVEEA…IGLPEEIVQR (199 aa)). 244–250 (SGGVDSS) serves as a coordination point for ATP.

In terms of assembly, homodimer.

It catalyses the reaction XMP + L-glutamine + ATP + H2O = GMP + L-glutamate + AMP + diphosphate + 2 H(+). It functions in the pathway purine metabolism; GMP biosynthesis; GMP from XMP (L-Gln route): step 1/1. Its function is as follows. Catalyzes the synthesis of GMP from XMP. The sequence is that of GMP synthase [glutamine-hydrolyzing] from Nostoc punctiforme (strain ATCC 29133 / PCC 73102).